The following is a 361-amino-acid chain: Phospho-N-acetylmuramoyl-pentapeptide-transferase (361 aa).

The next 10 helical transmembrane spans lie at 28–48, 74–94, 99–119, 133–153, 168–188, 203–223, 236–256, 263–283, 288–308, and 338–358; these read LAIIITLSLSFIMGPILIKFL, TMGGIMIILSSGLSTLLLADL, IWITLFGFISFGIIGFMDDYA, SKLVLQGIISLIICVLLEYLD, LNLDLGYFYIVFAIFVIVGSS, VPIAFTAGSFALISYLVGNLI, TGELTVLCAGLVGSCLGFLWF, VFMGDTGSLSLGGVLGIISVI, IVLAIVGGLFVIETASVILQV, and KVVIRFWIISVIFALIGLSSL.

The protein belongs to the glycosyltransferase 4 family. MraY subfamily. The cofactor is Mg(2+).

The protein localises to the cell inner membrane. It carries out the reaction UDP-N-acetyl-alpha-D-muramoyl-L-alanyl-gamma-D-glutamyl-meso-2,6-diaminopimeloyl-D-alanyl-D-alanine + di-trans,octa-cis-undecaprenyl phosphate = di-trans,octa-cis-undecaprenyl diphospho-N-acetyl-alpha-D-muramoyl-L-alanyl-D-glutamyl-meso-2,6-diaminopimeloyl-D-alanyl-D-alanine + UMP. The protein operates within cell wall biogenesis; peptidoglycan biosynthesis. In terms of biological role, catalyzes the initial step of the lipid cycle reactions in the biosynthesis of the cell wall peptidoglycan: transfers peptidoglycan precursor phospho-MurNAc-pentapeptide from UDP-MurNAc-pentapeptide onto the lipid carrier undecaprenyl phosphate, yielding undecaprenyl-pyrophosphoryl-MurNAc-pentapeptide, known as lipid I. The sequence is that of Phospho-N-acetylmuramoyl-pentapeptide-transferase from Rickettsia akari (strain Hartford).